The chain runs to 245 residues: 1-(5-phosphoribosyl)-5-[(5-phosphoribosylamino)methylideneamino] imidazole-4-carboxamide isomerase (245 aa).

The active-site Proton acceptor is the Asp7. Residue Asp129 is the Proton donor of the active site.

Belongs to the HisA/HisF family.

The protein localises to the cytoplasm. The catalysed reaction is 1-(5-phospho-beta-D-ribosyl)-5-[(5-phospho-beta-D-ribosylamino)methylideneamino]imidazole-4-carboxamide = 5-[(5-phospho-1-deoxy-D-ribulos-1-ylimino)methylamino]-1-(5-phospho-beta-D-ribosyl)imidazole-4-carboxamide. Its pathway is amino-acid biosynthesis; L-histidine biosynthesis; L-histidine from 5-phospho-alpha-D-ribose 1-diphosphate: step 4/9. The polypeptide is 1-(5-phosphoribosyl)-5-[(5-phosphoribosylamino)methylideneamino] imidazole-4-carboxamide isomerase (Klebsiella pneumoniae subsp. pneumoniae (strain ATCC 700721 / MGH 78578)).